The sequence spans 625 residues: tRNA uridine 5-carboxymethylaminomethyl modification enzyme MnmG (625 aa).

FAD contacts are provided by residues 13–18 (GGGHAG), Val125, and Ser182. 276–290 (GPRYCPSIEDKITRF) serves as a coordination point for NAD(+). FAD is bound at residue Gln373.

Belongs to the MnmG family. Homodimer. Heterotetramer of two MnmE and two MnmG subunits. FAD is required as a cofactor.

Its subcellular location is the cytoplasm. Functionally, NAD-binding protein involved in the addition of a carboxymethylaminomethyl (cmnm) group at the wobble position (U34) of certain tRNAs, forming tRNA-cmnm(5)s(2)U34. The sequence is that of tRNA uridine 5-carboxymethylaminomethyl modification enzyme MnmG from Lactococcus lactis subsp. cremoris (strain MG1363).